The following is a 105-amino-acid chain: MSFKEITPQQAWEMMQQGAILVDIRDNMRFAYSHPKGAFHLTNQSFLQFEELADFDSPIIVSCYHGVSSRNVATFLVEQGYENVFSMIGGFDGWCRAELPIDTAY.

The Rhodanese domain occupies 15–103 (MQQGAILVDI…WCRAELPIDT (89 aa)). C63 functions as the Cysteine persulfide intermediate in the catalytic mechanism.

The protein belongs to the GlpE family.

Its subcellular location is the cytoplasm. The catalysed reaction is thiosulfate + hydrogen cyanide = thiocyanate + sulfite + 2 H(+). It carries out the reaction thiosulfate + [thioredoxin]-dithiol = [thioredoxin]-disulfide + hydrogen sulfide + sulfite + 2 H(+). Transferase that catalyzes the transfer of sulfur from thiosulfate to thiophilic acceptors such as cyanide or dithiols. May function in a CysM-independent thiosulfate assimilation pathway by catalyzing the conversion of thiosulfate to sulfite, which can then be used for L-cysteine biosynthesis. In Haemophilus influenzae (strain PittEE), this protein is Thiosulfate sulfurtransferase GlpE.